The chain runs to 87 residues: Small ribosomal subunit protein bS20 (87 aa).

Residues 1-15 (MANTRSAKKMVRKIA) are compositionally biased toward basic residues. Disordered regions lie at residues 1–22 (MANTRSAKKMVRKIAARTDVNK) and 64–87 (KGVTHKNTASRKVSRLSARVKAMA).

This sequence belongs to the bacterial ribosomal protein bS20 family.

Binds directly to 16S ribosomal RNA. This is Small ribosomal subunit protein bS20 from Hyphomonas neptunium (strain ATCC 15444).